Reading from the N-terminus, the 29-residue chain is Glucagon (29 aa).

Position 2 is a phosphoserine (serine 2).

The protein belongs to the glucagon family.

The protein resides in the secreted. Functionally, glucagon plays a key role in glucose metabolism and homeostasis. Regulates blood glucose by increasing gluconeogenesis and decreasing glycolysis. The polypeptide is Glucagon (GCG) (Oryctolagus cuniculus (Rabbit)).